The chain runs to 327 residues: Lipid phosphate phosphatase 1 (327 aa).

The next 6 helical transmembrane spans lie at 51–71 (WIIL…SPFY), 93–113 (IWSV…CFYL), 118–138 (VYDL…TGVI), 187–207 (FPSG…LYLS), 217–237 (GHVA…LVGI), and 244–264 (WHHW…AAFC).

It belongs to the PA-phosphatase related phosphoesterase family. Strongly expressed in leaves, moderately in roots, weakly in floral hamps and flower buds, and not detected in adult flowers and seedpods.

It is found in the membrane. With respect to regulation, PA phosphatase activity inhibited by N-ethylmaleimide with an IC(50) value of 10 mM. Its function is as follows. Plays a general role in cellular responses to stress, may be by attenuating the signal produced by phospholipases. Exhibits both diacylglycerol pyrophosphate (DGPP) phosphatase and phosphatidate (PA) phosphatase activities. Substrate preference is diacylglycerol pyrophosphate &gt; phosphatidate. This chain is Lipid phosphate phosphatase 1 (LPP1), found in Arabidopsis thaliana (Mouse-ear cress).